A 151-amino-acid chain; its full sequence is Transcriptional regulator SyrB (151 aa).

A disordered region spans residues M1–K61. Residues P33–A48 are compositionally biased toward low complexity. The segment covering R52 to K61 has biased composition (basic and acidic residues).

It belongs to the SyrB family.

In terms of biological role, responsible for the repression of SyrM activity. The chain is Transcriptional regulator SyrB (syrB) from Rhizobium meliloti (strain 1021) (Ensifer meliloti).